The sequence spans 496 residues: MESVTRHRADMISFFTFDSYISIVGVAYTAVGLLGVFCNVTTVIMILTNRVFRLSAYTIMANVALADSIVMLIAGVACGMDVMWPNPNDLTSFIPSLEEPYQKIAPVSLRNDSKTDSSAAGFETGNIHAVLSFSFVAAWTAGVISYAMLGTNRCIAICYYGTKARALNQVSVAVACSASTWIVGIAAALVGTLSQPMIGIQRTMWSISFLEPRPHTTLFFTLLCAANLLGLGAQWVCSTLVLLKIRQVKKKISKNKLNQNSANRFRKQVILALNEIIVTGNFKARLTFQFFYPSILCTISTFLFFIKPYAFEYLSGWQLVILHLLWLCNHTCNPFIYAYFNDRMRLTYKEILTCAAIRYQIRKRRSSHPFRMHGRHNVSKRSNAAGMKSTRISARSGRTNRDGNFVRNSLQMQSRDFEQLCEFIMRVNPLYDSSEGWRESSDDEPFQPEFTKELESAHNQGGSSRFDSEREAKSIVLDLGRQTVEHWVKFAKKASI.

The Extracellular portion of the chain corresponds to 1 to 19; the sequence is MESVTRHRADMISFFTFDS. Residues 20–40 traverse the membrane as a helical segment; sequence YISIVGVAYTAVGLLGVFCNV. Over 41 to 58 the chain is Cytoplasmic; it reads TTVIMILTNRVFRLSAYT. Residues 59–79 traverse the membrane as a helical segment; that stretch reads IMANVALADSIVMLIAGVACG. The Extracellular portion of the chain corresponds to 80-128; the sequence is MDVMWPNPNDLTSFIPSLEEPYQKIAPVSLRNDSKTDSSAAGFETGNIH. Residue Asn111 is glycosylated (N-linked (GlcNAc...) asparagine). Residues 129–149 form a helical membrane-spanning segment; it reads AVLSFSFVAAWTAGVISYAML. The Cytoplasmic portion of the chain corresponds to 150 to 169; the sequence is GTNRCIAICYYGTKARALNQ. Residues 170 to 190 form a helical membrane-spanning segment; that stretch reads VSVAVACSASTWIVGIAAALV. The Extracellular segment spans residues 191-216; the sequence is GTLSQPMIGIQRTMWSISFLEPRPHT. Residues 217–237 form a helical membrane-spanning segment; the sequence is TLFFTLLCAANLLGLGAQWVC. Residues 238-285 are Cytoplasmic-facing; that stretch reads STLVLLKIRQVKKKISKNKLNQNSANRFRKQVILALNEIIVTGNFKAR. Residues 286-306 traverse the membrane as a helical segment; the sequence is LTFQFFYPSILCTISTFLFFI. Residues 307–318 lie on the Extracellular side of the membrane; sequence KPYAFEYLSGWQ. The chain crosses the membrane as a helical span at residues 319-339; that stretch reads LVILHLLWLCNHTCNPFIYAY. Over 340-496 the chain is Cytoplasmic; that stretch reads FNDRMRLTYK…WVKFAKKASI (157 aa). Positions 451 to 470 are disordered; the sequence is TKELESAHNQGGSSRFDSER.

It belongs to the G-protein coupled receptor 1 family.

The protein resides in the cell membrane. The polypeptide is Probable G-protein coupled receptor K01A12.3 (Caenorhabditis elegans).